The chain runs to 84 residues: Cell division topological specificity factor (84 aa).

It belongs to the MinE family.

In terms of biological role, prevents the cell division inhibition by proteins MinC and MinD at internal division sites while permitting inhibition at polar sites. This ensures cell division at the proper site by restricting the formation of a division septum at the midpoint of the long axis of the cell. The protein is Cell division topological specificity factor of Azotobacter vinelandii (strain DJ / ATCC BAA-1303).